The sequence spans 100 residues: uncharacterized protein (100 aa).

The helical transmembrane segment at 68–88 (VFLFFFTGSSPSFPAALLGLF) threads the bilayer.

It localises to the membrane. This is an uncharacterized protein from Saccharomyces cerevisiae (strain ATCC 204508 / S288c) (Baker's yeast).